We begin with the raw amino-acid sequence, 397 residues long: Intermediate capsid protein VP6 (397 aa).

The segment at 62 to 73 (DFGLLGTTLLNL) is interaction with the inner capsid protein VP2. Position 153 (H153) interacts with Zn(2+). N266 and D286 together coordinate Ca(2+).

The protein belongs to the rotavirus VP6 family. Homotrimer. Interacts with the inner capsid protein VP2. Interacts with the outer capsid glycoprotein VP7. Interacts with the outer capsid protein VP5*. In terms of processing, the N-terminus is blocked. Sumoylated with SUMO1 and SUMO2. Sumoylation of viral proteins seems to have a positive role on viral replication.

The protein resides in the virion. Its function is as follows. Intermediate capsid protein that self assembles to form an icosahedral capsid with a T=13 symmetry, which consists of 230 trimers of VP6, with channels at each of its five-fold vertices. This capsid constitutes the middle concentric layer of the viral mature particle. The innermost VP2 capsid and the intermediate VP6 capsid remain intact following cell entry to protect the dsRNA from degradation and to prevent unfavorable antiviral responses in the host cell during all the replication cycle of the virus. Nascent transcripts are transcribed within the structural confines of this double-layered particle (DLP) and are extruded through the channels at the five-fold axes. VP6 is required for the transcription activity of the DLP. This Rotavirus A (isolate RVA/Human/United States/WI61/1983/G9P1A[8]) (RV-A) protein is Intermediate capsid protein VP6.